The following is a 351-amino-acid chain: DNA polymerase IV (351 aa).

The 182-residue stretch at 4–185 (IIHVDMDCFF…LPLAKIPGVG (182 aa)) folds into the UmuC domain. Asp8 and Asp103 together coordinate Mg(2+). Glu104 is a catalytic residue.

It belongs to the DNA polymerase type-Y family. As to quaternary structure, monomer. Mg(2+) is required as a cofactor.

It localises to the cytoplasm. It carries out the reaction DNA(n) + a 2'-deoxyribonucleoside 5'-triphosphate = DNA(n+1) + diphosphate. In terms of biological role, poorly processive, error-prone DNA polymerase involved in untargeted mutagenesis. Copies undamaged DNA at stalled replication forks, which arise in vivo from mismatched or misaligned primer ends. These misaligned primers can be extended by PolIV. Exhibits no 3'-5' exonuclease (proofreading) activity. May be involved in translesional synthesis, in conjunction with the beta clamp from PolIII. The sequence is that of DNA polymerase IV from Salmonella arizonae (strain ATCC BAA-731 / CDC346-86 / RSK2980).